The chain runs to 315 residues: Calumenin (315 aa).

Residues 1–19 (MDLRQFLMCLSLCTAFALS) form the signal peptide. Position 44 is a phosphoserine (S44). Y47 carries the post-translational modification Phosphotyrosine. At T65 the chain carries Phosphothreonine. 6 EF-hand domains span residues 68–103 (ESKERLGMIVDKIDADKDGFVTEGELKSWIKHAQKK), 104–139 (YIYDNVENQWQEFDLNQDGLISWDEYRNVTYGTYLD), 151–186 (QMMVRDERRFKMADKDGDLIATKEEFTAFLHPEEYD), 188–223 (MKDIVVQEPMEDIDKNADGFIDLEEYIGDMYSHDGN), 229–264 (WVKTEREQFVEFRDKNRDGKMDKEETKDWILPSDYD), and 265–300 (HAEAEARHLVYESDQNKDGKLTKEEIVDKYDLFVGS). A Phosphoserine modification is found at S69. The Ca(2+) site is built by D81, D83, D85, E92, D117, N119, D121, and E128. A glycan (N-linked (GlcNAc...) asparagine) is linked at N131. D164 serves as a coordination point for Ca(2+). K165 carries the post-translational modification N6-acetyllysine. Ca(2+) is bound by residues D166, D168, E175, D201, N203, D205, E212, D242, N244, D246, K248, and E253. A Phosphothreonine modification is found at T254. Residues S261 and S277 each carry the phosphoserine modification. D278, N280, D282, K284, and E289 together coordinate Ca(2+). The short motif at 312–315 (HDEF) is the Prevents secretion from ER element.

Belongs to the CREC family. In terms of assembly, interacts with GGCX.

The protein resides in the endoplasmic reticulum membrane. The protein localises to the golgi apparatus. It localises to the secreted. It is found in the melanosome. Its subcellular location is the sarcoplasmic reticulum lumen. Its function is as follows. Involved in regulation of vitamin K-dependent carboxylation of multiple N-terminal glutamate residues. Seems to inhibit gamma-carboxylase GGCX. Binds 7 calcium ions with a low affinity. The chain is Calumenin (CALU) from Bos taurus (Bovine).